Consider the following 416-residue polypeptide: Glutamyl-tRNA reductase (416 aa).

Substrate contacts are provided by residues 49-52 (TCNR), serine 105, 110-112 (ETQ), and glutamine 116. The active-site Nucleophile is the cysteine 50. NADP(+) is bound at residue 185 to 190 (GAGEMI).

This sequence belongs to the glutamyl-tRNA reductase family. Homodimer.

The catalysed reaction is (S)-4-amino-5-oxopentanoate + tRNA(Glu) + NADP(+) = L-glutamyl-tRNA(Glu) + NADPH + H(+). The protein operates within porphyrin-containing compound metabolism; protoporphyrin-IX biosynthesis; 5-aminolevulinate from L-glutamyl-tRNA(Glu): step 1/2. Its function is as follows. Catalyzes the NADPH-dependent reduction of glutamyl-tRNA(Glu) to glutamate 1-semialdehyde (GSA). This is Glutamyl-tRNA reductase from Thiobacillus denitrificans (strain ATCC 25259 / T1).